A 448-amino-acid polypeptide reads, in one-letter code: Tubulin beta chain (448 aa).

GTP-binding residues include glutamine 11, glutamate 69, serine 138, glycine 142, threonine 143, glycine 144, asparagine 204, and asparagine 226. Residue glutamate 69 coordinates Mg(2+). The disordered stretch occupies residues glycine 429 to tyrosine 448.

This sequence belongs to the tubulin family. Dimer of alpha and beta chains. A typical microtubule is a hollow water-filled tube with an outer diameter of 25 nm and an inner diameter of 15 nM. Alpha-beta heterodimers associate head-to-tail to form protofilaments running lengthwise along the microtubule wall with the beta-tubulin subunit facing the microtubule plus end conferring a structural polarity. Microtubules usually have 13 protofilaments but different protofilament numbers can be found in some organisms and specialized cells. The cofactor is Mg(2+).

It localises to the cytoplasm. Its subcellular location is the cytoskeleton. Tubulin is the major constituent of microtubules, a cylinder consisting of laterally associated linear protofilaments composed of alpha- and beta-tubulin heterodimers. Microtubules grow by the addition of GTP-tubulin dimers to the microtubule end, where a stabilizing cap forms. Below the cap, tubulin dimers are in GDP-bound state, owing to GTPase activity of alpha-tubulin. This chain is Tubulin beta chain (nda3), found in Schizosaccharomyces pombe (strain 972 / ATCC 24843) (Fission yeast).